A 186-amino-acid polypeptide reads, in one-letter code: Pyridoxal 5'-phosphate synthase subunit PdxT (186 aa).

46–48 (GES) provides a ligand contact to L-glutamine. Cys78 functions as the Nucleophile in the catalytic mechanism. Residues Arg105 and 134-135 (IR) each bind L-glutamine. Catalysis depends on charge relay system residues His170 and Glu172.

Belongs to the glutaminase PdxT/SNO family. In terms of assembly, in the presence of PdxS, forms a dodecamer of heterodimers. Only shows activity in the heterodimer.

It catalyses the reaction aldehydo-D-ribose 5-phosphate + D-glyceraldehyde 3-phosphate + L-glutamine = pyridoxal 5'-phosphate + L-glutamate + phosphate + 3 H2O + H(+). It carries out the reaction L-glutamine + H2O = L-glutamate + NH4(+). It functions in the pathway cofactor biosynthesis; pyridoxal 5'-phosphate biosynthesis. In terms of biological role, catalyzes the hydrolysis of glutamine to glutamate and ammonia as part of the biosynthesis of pyridoxal 5'-phosphate. The resulting ammonia molecule is channeled to the active site of PdxS. This is Pyridoxal 5'-phosphate synthase subunit PdxT from Clostridium acetobutylicum (strain ATCC 824 / DSM 792 / JCM 1419 / IAM 19013 / LMG 5710 / NBRC 13948 / NRRL B-527 / VKM B-1787 / 2291 / W).